Here is a 338-residue protein sequence, read N- to C-terminus: Fructose-1,6-bisphosphatase class 1 (338 aa).

Glu92, Asp115, Leu117, and Asp118 together coordinate Mg(2+). Residues 118–121 (DGSS), Asn211, Tyr244, 262–264 (YLY), and Lys274 contribute to the substrate site. Glu280 contacts Mg(2+).

The protein belongs to the FBPase class 1 family. Homotetramer. Requires Mg(2+) as cofactor.

It is found in the cytoplasm. It carries out the reaction beta-D-fructose 1,6-bisphosphate + H2O = beta-D-fructose 6-phosphate + phosphate. It functions in the pathway carbohydrate biosynthesis; gluconeogenesis. In Vibrio parahaemolyticus serotype O3:K6 (strain RIMD 2210633), this protein is Fructose-1,6-bisphosphatase class 1.